The primary structure comprises 195 residues: A-type ATP synthase subunit E (195 aa).

This sequence belongs to the V-ATPase E subunit family. In terms of assembly, has multiple subunits with at least A(3), B(3), C, D, E, F, H, I and proteolipid K(x).

The protein localises to the cell membrane. Functionally, component of the A-type ATP synthase that produces ATP from ADP in the presence of a proton gradient across the membrane. This is A-type ATP synthase subunit E from Halobacterium salinarum (strain ATCC 29341 / DSM 671 / R1).